The following is a 105-amino-acid chain: Large ribosomal subunit protein uL23 (105 aa).

Belongs to the universal ribosomal protein uL23 family. As to quaternary structure, part of the 50S ribosomal subunit. Contacts protein L29, and trigger factor when it is bound to the ribosome.

In terms of biological role, one of the early assembly proteins it binds 23S rRNA. One of the proteins that surrounds the polypeptide exit tunnel on the outside of the ribosome. Forms the main docking site for trigger factor binding to the ribosome. The sequence is that of Large ribosomal subunit protein uL23 from Ureaplasma urealyticum serovar 10 (strain ATCC 33699 / Western).